The sequence spans 116 residues: Large ribosomal subunit protein bL17 (116 aa).

It belongs to the bacterial ribosomal protein bL17 family. As to quaternary structure, part of the 50S ribosomal subunit. Contacts protein L32.

In Dictyoglomus turgidum (strain DSM 6724 / Z-1310), this protein is Large ribosomal subunit protein bL17.